The chain runs to 170 residues: Adenine phosphoribosyltransferase (170 aa).

This sequence belongs to the purine/pyrimidine phosphoribosyltransferase family. In terms of assembly, homodimer.

The protein resides in the cytoplasm. The enzyme catalyses AMP + diphosphate = 5-phospho-alpha-D-ribose 1-diphosphate + adenine. It functions in the pathway purine metabolism; AMP biosynthesis via salvage pathway; AMP from adenine: step 1/1. Its function is as follows. Catalyzes a salvage reaction resulting in the formation of AMP, that is energically less costly than de novo synthesis. The chain is Adenine phosphoribosyltransferase from Thermotoga petrophila (strain ATCC BAA-488 / DSM 13995 / JCM 10881 / RKU-1).